The following is a 210-amino-acid chain: UPF0637 protein RBAM_014510 (210 aa).

Belongs to the UPF0637 family.

This Bacillus velezensis (strain DSM 23117 / BGSC 10A6 / LMG 26770 / FZB42) (Bacillus amyloliquefaciens subsp. plantarum) protein is UPF0637 protein RBAM_014510.